The sequence spans 177 residues: uncharacterized protein (177 aa).

Helical transmembrane passes span 20–42 (NLVSYAVGGILAIAGYVLILLAL), 62–84 (VVLWIIAVLIVIFAVGISFVSLS), 94–116 (AMSSFLVGVILFYILSVIGGYFI), and 136–158 (GLLYFIGTLLLIVIVGIIVIIVA).

The protein resides in the cell membrane. This is an uncharacterized protein from Methanocaldococcus jannaschii (strain ATCC 43067 / DSM 2661 / JAL-1 / JCM 10045 / NBRC 100440) (Methanococcus jannaschii).